The chain runs to 149 residues: Large ribosomal subunit protein eL19 (149 aa).

The interval 45 to 130 (VDEGAIQAKD…RDLYDKAGGG (86 aa)) is disordered. Over residues 58–85 (NSRGRARERQKKRAYGHQKGAGSRKGKA) the composition is skewed to basic residues. The segment covering 90-113 (NSKEDWESRIRAQRTKLRELRDEG) has biased composition (basic and acidic residues).

It belongs to the eukaryotic ribosomal protein eL19 family. In terms of assembly, part of the 50S ribosomal subunit.

Its function is as follows. Binds to the 23S rRNA. Located at the polypeptide exit tunnel on the outside of the subunit. The sequence is that of Large ribosomal subunit protein eL19 from Haloarcula marismortui (strain ATCC 43049 / DSM 3752 / JCM 8966 / VKM B-1809) (Halobacterium marismortui).